Consider the following 683-residue polypeptide: U4/U6 small nuclear ribonucleoprotein Prp3 (683 aa).

The 87-residue stretch at Met1–Arg87 folds into the PWI domain. Residues Gly73–Gly107 are compositionally biased toward basic and acidic residues. Residues Gly73–Gly135 are disordered. A Glycyl lysine isopeptide (Lys-Gly) (interchain with G-Cter in SUMO2) cross-link involves residue Lys139. The disordered stretch occupies residues Ser161–Ile183. Ser164 is modified (phosphoserine). Glycyl lysine isopeptide (Lys-Gly) (interchain with G-Cter in SUMO2) cross-links involve residues Lys244 and Lys252. A mediates interaction with SART3 region spans residues Asn416–Asn550. A Phosphoserine modification is found at Ser619.

In terms of assembly, component of the precatalytic spliceosome (spliceosome B complex). Component of the U4/U6-U5 tri-snRNP complex, a building block of the precatalytic spliceosome (spliceosome B complex). The U4/U6-U5 tri-snRNP complex is composed of the U4, U6 and U5 snRNAs and at least PRPF3, PRPF4, PRPF6, PRPF8, PRPF31, SNRNP200, TXNL4A, SNRNP40, SNRPB, SNRPD1, SNRPD2, SNRPD3, SNRPE, SNRPF, SNRPG, DDX23, CD2BP2, PPIH, SNU13, EFTUD2, SART1 and USP39, plus LSM2, LSM3, LSM4, LSM5, LSM6, LSM7 and LSM8. Interacts directly with PRPF4. Part of a heteromeric complex containing PPIH, PRPF3 and PRPF4 that is stable in the absence of RNA. Interacts with SART3; the interaction is direct and recruits the deubiquitinase USP4 to PRPF3. Interacts with PRPF19. Interacts ('Lys-63'-linked polyubiquitinated) with PRPF8 (via the MPN (JAB/Mov34) domain); may stabilize the U4/U6-U5 tri-snRNP complex. Interacts with ERCC6. In terms of processing, ubiquitinated. Undergoes 'Lys-63'-linked polyubiquitination by PRPF19 and deubiquitination by USP4. 'Lys-63'-linked ubiquitination increases the affinity for PRPF8 and may regulate the assembly of the U4/U6-U5 tri-snRNP complex.

It localises to the nucleus. Its subcellular location is the nucleus speckle. In terms of biological role, plays a role in pre-mRNA splicing as component of the U4/U6-U5 tri-snRNP complex that is involved in spliceosome assembly, and as component of the precatalytic spliceosome (spliceosome B complex). The sequence is that of U4/U6 small nuclear ribonucleoprotein Prp3 (Prpf3) from Mus musculus (Mouse).